Here is a 198-residue protein sequence, read N- to C-terminus: Glycerol-3-phosphate acyltransferase (198 aa).

The next 5 membrane-spanning stretches (helical) occupy residues 2–22 (YAVLTAIIAYLIGCINNAYIF), 48–70 (LGYKAAAPVFALDVLKGVIAVLI), 75–97 (MGNTGAMIAGIAVVCGHNWPVFL), 111–131 (VVMTVSPLLGLIALAIGVTVI), and 154–174 (IFWNSTQIFIFSLILASLAIF).

It belongs to the PlsY family. As to quaternary structure, probably interacts with PlsX.

Its subcellular location is the cell membrane. The enzyme catalyses an acyl phosphate + sn-glycerol 3-phosphate = a 1-acyl-sn-glycero-3-phosphate + phosphate. It participates in lipid metabolism; phospholipid metabolism. In terms of biological role, catalyzes the transfer of an acyl group from acyl-phosphate (acyl-PO(4)) to glycerol-3-phosphate (G3P) to form lysophosphatidic acid (LPA). This enzyme utilizes acyl-phosphate as fatty acyl donor, but not acyl-CoA or acyl-ACP. This chain is Glycerol-3-phosphate acyltransferase, found in Thermoanaerobacter sp. (strain X514).